Consider the following 992-residue polypeptide: Meckelin (992 aa).

Positions Met1 to Trp35 are cleaved as a signal peptide. Topologically, residues Ala36–Asp516 are extracellular. Residues Gln37–Gly280 form a cysteine-rich region. Disulfide bonds link Cys49–Cys62, Cys65–Cys78, Cys80–Cys97, Cys100–Cys114, Cys117–Cys127, Cys129–Cys150, Cys153–Cys170, Cys173–Cys184, Cys186–Cys197, Cys237–Cys246, Cys253–Cys268, and Cys354–Cys375. Asn242 carries an N-linked (GlcNAc...) asparagine glycan. A helical transmembrane segment spans residues Ala517 to Arg545. Over Arg546–Gln555 the chain is Cytoplasmic. A helical membrane pass occupies residues Thr556–Phe587. The Extracellular segment spans residues Lys588 to Pro600. Residues Val601–Gln628 form a helical membrane-spanning segment. The Cytoplasmic segment spans residues Ile629–Thr667. Positions Tyr668–Glu676 form an intramembrane region, helical. The chain crosses the membrane as a discontinuously helical span at residues Tyr668 to Val698. An intramembrane segment occupies Ile677–Pro685. The segment at residues Leu686–Val698 is an intramembrane region (helical). At Val699–Leu728 the chain is on the extracellular side. The segment at residues Arg729 to Arg754 is an intramembrane region (helical). A discontinuously helical membrane pass occupies residues Arg729–Ser768. An intramembrane segment occupies Phe755 to Lys759. The helical intramembrane region spans Ile760–Ser768. Over Met769–Ser923 the chain is Cytoplasmic. Residues Phe924–Ser926 constitute an intramembrane region (helical). The discontinuously helical transmembrane segment at Phe924 to Leu949 threads the bilayer. The stretch at Val927–Glu933 is an intramembrane region. An intramembrane region (helical) is located at residues Ala934–Leu949. The Extracellular portion of the chain corresponds to Ala950–Phe954. A helical membrane pass occupies residues Val955–Thr982. The Cytoplasmic portion of the chain corresponds to Lys983–Ile992.

In terms of assembly, homodimer. Part of the tectonic-like complex (also named B9 complex). Interacts with DNAJB9, DNAJC10 and mutated SFTPC. Interacts with SYNE2 during the early establishment of cell polarity. Interacts (via C-terminus) with FLNA. Interacts with TMEM218. Interacts with WNT5A. Interacts with ROR2.

The protein localises to the cell membrane. It localises to the endoplasmic reticulum membrane. Its subcellular location is the cytoplasm. The protein resides in the cytoskeleton. It is found in the cilium basal body. Its function is as follows. Part of the tectonic-like complex which is required for tissue-specific ciliogenesis and may regulate ciliary membrane composition. Involved in centrosome migration to the apical cell surface during early ciliogenesis. Required for ciliary structure and function, including a role in regulating length and appropriate number through modulating centrosome duplication. Is a key regulator of stereociliary bundle orientation. Required for epithelial cell branching morphology. Essential for endoplasmic reticulum-associated degradation (ERAD) of surfactant protein C (sftpc). Involved in the negative regulation of canonical Wnt signaling, and activation of the non-canonical cascade stimulated by WNT5A. In non-canonical Wnt signaling, it may act as ROR2 coreceptor. This is Meckelin (Tmem67) from Rattus norvegicus (Rat).